A 231-amino-acid polypeptide reads, in one-letter code: tRNA (guanine-N(1)-)-methyltransferase (231 aa).

Residues G111 and 131 to 136 (LGNYVL) contribute to the S-adenosyl-L-methionine site.

The protein belongs to the RNA methyltransferase TrmD family. Homodimer.

The protein resides in the cytoplasm. It carries out the reaction guanosine(37) in tRNA + S-adenosyl-L-methionine = N(1)-methylguanosine(37) in tRNA + S-adenosyl-L-homocysteine + H(+). Functionally, specifically methylates guanosine-37 in various tRNAs. The protein is tRNA (guanine-N(1)-)-methyltransferase of Leptospira interrogans serogroup Icterohaemorrhagiae serovar copenhageni (strain Fiocruz L1-130).